The sequence spans 1330 residues: Sister chromatid cohesion protein PDS5 homolog A (1330 aa).

The HEAT repeat unit spans residues 387–423 (SLVNDQLLGFVRERTLDKRWRVRKEAMMGLAQLYKKY). The tract at residues 1138 to 1330 (VNKPLSATGR…AAQRQIDLQR (193 aa)) is disordered. The span at 1160–1171 (SNISVNSELSSS) shows a compositional bias: low complexity. Positions 1216–1225 (SDQATQGNST) are enriched in polar residues.

The protein belongs to the PDS5 family. Interacts with the cohesin complex. Binds chromatin in a cohesin-dependent manner.

It is found in the nucleus. May regulate sister chromatid cohesion during mitosis and couple it to DNA replication. The chain is Sister chromatid cohesion protein PDS5 homolog A from Gallus gallus (Chicken).